Consider the following 242-residue polypeptide: 1-(5-phosphoribosyl)-5-[(5-phosphoribosylamino)methylideneamino] imidazole-4-carboxamide isomerase (242 aa).

Asp10 acts as the Proton acceptor in catalysis. Asp131 serves as the catalytic Proton donor.

The protein belongs to the HisA/HisF family.

It localises to the cytoplasm. The enzyme catalyses 1-(5-phospho-beta-D-ribosyl)-5-[(5-phospho-beta-D-ribosylamino)methylideneamino]imidazole-4-carboxamide = 5-[(5-phospho-1-deoxy-D-ribulos-1-ylimino)methylamino]-1-(5-phospho-beta-D-ribosyl)imidazole-4-carboxamide. The protein operates within amino-acid biosynthesis; L-histidine biosynthesis; L-histidine from 5-phospho-alpha-D-ribose 1-diphosphate: step 4/9. This chain is 1-(5-phosphoribosyl)-5-[(5-phosphoribosylamino)methylideneamino] imidazole-4-carboxamide isomerase, found in Bifidobacterium animalis subsp. lactis (strain AD011).